Here is a 274-residue protein sequence, read N- to C-terminus: Diaminopimelate epimerase (274 aa).

Positions 11, 44, and 64 each coordinate substrate. Cysteine 73 serves as the catalytic Proton donor. Substrate is bound by residues 74–75 (GN), asparagine 157, asparagine 190, and 208–209 (ER). Catalysis depends on cysteine 217, which acts as the Proton acceptor. 218–219 (GS) is a substrate binding site.

This sequence belongs to the diaminopimelate epimerase family. In terms of assembly, homodimer.

The protein localises to the cytoplasm. It carries out the reaction (2S,6S)-2,6-diaminopimelate = meso-2,6-diaminopimelate. Its pathway is amino-acid biosynthesis; L-lysine biosynthesis via DAP pathway; DL-2,6-diaminopimelate from LL-2,6-diaminopimelate: step 1/1. Catalyzes the stereoinversion of LL-2,6-diaminopimelate (L,L-DAP) to meso-diaminopimelate (meso-DAP), a precursor of L-lysine and an essential component of the bacterial peptidoglycan. The sequence is that of Diaminopimelate epimerase from Glaesserella parasuis serovar 5 (strain SH0165) (Haemophilus parasuis).